A 66-amino-acid chain; its full sequence is Small ribosomal subunit protein bS21 (66 aa).

Positions 47 to 66 are disordered; it reads KAQEAARRKRKFARKRMYED. Over residues 53–66 the composition is skewed to basic residues; the sequence is RRKRKFARKRMYED.

It belongs to the bacterial ribosomal protein bS21 family.

The sequence is that of Small ribosomal subunit protein bS21 from Rickettsia bellii (strain RML369-C).